The chain runs to 309 residues: Calcium homeostasis modulator protein 5 (309 aa).

Over 1–15 (MDAFQSILKFFLNQK) the chain is Cytoplasmic. A helical membrane pass occupies residues 16 to 37 (TAIGYSFMALLTVGSERLFSLV). Residues R32 and V37 each coordinate a 1,2-diacyl-sn-glycero-3-phosphate. At 38 to 45 (AFKCPCSI) the chain is on the extracellular side. Cystine bridges form between C41-C127, C43-C158, and C142-C149. Residues 46–70 (ENTAYGLVFLFAPAWVLLILGFFLN) form a helical membrane-spanning segment. Topologically, residues 71-99 (NKAWRLFTGCCMNPQKIFPRRRCCRFFYV) are cytoplasmic. A helical transmembrane segment spans residues 100 to 129 (LGHITLSSLVAPVMWLSVALLNGTFYECAM). N121 lines the a 1,2-diacyl-sn-glycero-3-phosphate pocket. At 130-174 (SGTRSTRLLEMICKGKPKECWEELHKVSCGKSSMAAMDSEEVRLS) the chain is on the extracellular side. A helical membrane pass occupies residues 175-200 (LQAQSQILGWCLICSASFFSLLTTCY). The Cytoplasmic portion of the chain corresponds to 201–309 (ARCRSKVSYL…MILVGTAQSL (109 aa)). R202 serves as a coordination point for a 1,2-diacyl-sn-glycero-3-phosphate.

This sequence belongs to the CALHM family. Oligomerizes to form undecameric cone-shaped channels.

It is found in the membrane. In terms of biological role, may assemble to form large pore channels with gating and ion conductance likely regulated by membrane lipids. The sequence is that of Calcium homeostasis modulator protein 5 from Rattus norvegicus (Rat).